Reading from the N-terminus, the 468-residue chain is 6-phosphogluconate dehydrogenase, decarboxylating (468 aa).

NADP(+) contacts are provided by residues 10 to 15, 33 to 35, 74 to 76, and asparagine 102; these read GMAVMG, NRS, and VKA. Substrate-binding positions include asparagine 102 and 128 to 130; that span reads SGG. Residue lysine 183 is the Proton acceptor of the active site. Position 186–187 (186–187) interacts with substrate; the sequence is HN. The Proton donor role is filled by glutamate 190. Residues tyrosine 191, lysine 260, arginine 287, arginine 445, and histidine 451 each contribute to the substrate site.

It belongs to the 6-phosphogluconate dehydrogenase family. In terms of assembly, homodimer.

It carries out the reaction 6-phospho-D-gluconate + NADP(+) = D-ribulose 5-phosphate + CO2 + NADPH. The protein operates within carbohydrate degradation; pentose phosphate pathway; D-ribulose 5-phosphate from D-glucose 6-phosphate (oxidative stage): step 3/3. In terms of biological role, catalyzes the oxidative decarboxylation of 6-phosphogluconate to ribulose 5-phosphate and CO(2), with concomitant reduction of NADP to NADPH. This Salmonella typhimurium (strain LT2 / SGSC1412 / ATCC 700720) protein is 6-phosphogluconate dehydrogenase, decarboxylating (gnd).